A 158-amino-acid polypeptide reads, in one-letter code: C-type lectin BfL-1 (158 aa).

Residues 1 to 21 (MGHFTFIGLCLLAMFLSLSGA) form the signal peptide. 4 disulfide bridges follow: C26/C37, C54/C154, C61/C156, and C129/C146. The 123-residue stretch at 33-155 (KNGLCYKVFS…CAALRPFLCQ (123 aa)) folds into the C-type lectin domain. Residues Q119, D121, and E127 each coordinate Ca(2+). Residues 119–121 (QPD) carry the Galactose-binding motif. Residue N134 is glycosylated (N-linked (GlcNAc...) asparagine). 2 residues coordinate Ca(2+): N142 and D143.

Belongs to the true venom lectin family. As to quaternary structure, homodimer; non-covalently linked. As to expression, expressed by the venom gland.

It is found in the secreted. In terms of biological role, galactose-binding lectin which recognizes specific carbohydrate structures and agglutinates a variety of animal cells by binding to cell-surface glycoproteins and glycolipids. May be a calcium-dependent lectin. In Bungarus fasciatus (Banded krait), this protein is C-type lectin BfL-1.